The sequence spans 98 residues: NADH-ubiquinone oxidoreductase chain 4L (98 aa).

3 helical membrane passes run 1 to 21 (MPFI…GLLI), 29 to 49 (SLLC…LMTL), and 61 to 81 (IVLL…LVLI).

This sequence belongs to the complex I subunit 4L family. Core subunit of respiratory chain NADH dehydrogenase (Complex I) which is composed of 45 different subunits.

The protein resides in the mitochondrion inner membrane. The enzyme catalyses a ubiquinone + NADH + 5 H(+)(in) = a ubiquinol + NAD(+) + 4 H(+)(out). Core subunit of the mitochondrial membrane respiratory chain NADH dehydrogenase (Complex I) which catalyzes electron transfer from NADH through the respiratory chain, using ubiquinone as an electron acceptor. Part of the enzyme membrane arm which is embedded in the lipid bilayer and involved in proton translocation. This chain is NADH-ubiquinone oxidoreductase chain 4L (MT-ND4L), found in Aotus trivirgatus (Three-striped night monkey).